The following is a 362-amino-acid chain: Solute carrier family 25 member 3 (362 aa).

The N-terminal 49 residues, 1–49, are a transit peptide targeting the mitochondrion; it reads MYSSVVHLARANPFNAPHLQLVHDGLAGPRSDPAGPPGPPRRSRNLAAA. Residues 50–63 are Mitochondrial intermembrane-facing; that stretch reads AVEEQYSCDYGSGR. Solcar repeat units follow at residues 63 to 147, 160 to 244, and 261 to 339; these read RFFI…FKVL, WRTS…TVEA, and EQLV…VKVY. The helical transmembrane segment at 64-86 threads the bilayer; that stretch reads FFILCGLGGIISCGTTHTALVPL. Topologically, residues 87–121 are mitochondrial matrix; it reads DLVKCRMQVDPQKYKSIFNGFSVTLKEDGFRGLAK. Lys99 is modified (N6-acetyllysine). Lys112 is modified (N6-methyllysine). The helical transmembrane segment at 122–141 threads the bilayer; sequence GWAPTFIGYSLQGLCKFGFY. The Mitochondrial intermembrane portion of the chain corresponds to 142-161; the sequence is EVFKVLYSNMLGEENAYLWR. Residues 162–183 form a helical membrane-spanning segment; the sequence is TSLYLAASASAEFFADIALAPM. Topologically, residues 184 to 218 are mitochondrial matrix; sequence EAAKVRIQTQPGYANTLRDAAPKMYKEEGLKAFYK. Residue Tyr196 is modified to Phosphotyrosine. Lys209 is modified (N6-acetyllysine). The helical transmembrane segment at 219-238 threads the bilayer; it reads GVAPLWMRQIPYTMMKFACF. At 239-261 the chain is on the mitochondrial intermembrane side; it reads ERTVEALYKFVVPKPRSECSKPE. The chain crosses the membrane as a helical span at residues 262 to 284; it reads QLVVTFVAGYIAGVFCAIVSHPA. The Mitochondrial matrix segment spans residues 285-314; sequence DSVVSVLNKEKGSSASEVLKRLGFRGVWKG. The chain crosses the membrane as a helical span at residues 315–333; sequence LFARIIMIGTLTALQWFIY. Over 334-362 the chain is Mitochondrial intermembrane; the sequence is DSVKVYFRLPRPPPPEMPESLKKKLGYTQ.

This sequence belongs to the mitochondrial carrier (TC 2.A.29) family. Interacts with PPIF; the interaction is impaired by CsA. Expressed in heart, diaphragm and skeletal muscle (at protein level). Not detected in liver, lung, brain, and kidney (at protein level). As to expression, ubiquitous (at protein level).

Its subcellular location is the mitochondrion inner membrane. It carries out the reaction phosphate(in) + H(+)(in) = phosphate(out) + H(+)(out). With respect to regulation, up-regulated in the presence of cardiolipin. Functionally, inorganic ion transporter that transports phosphate or copper ions across the mitochondrial inner membrane into the matrix compartment. Mediates proton-coupled symport of phosphate ions necessary for mitochondrial oxidative phosphorylation of ADP to ATP. Transports copper ions probably in the form of anionic copper(I) complexes to maintain mitochondrial matrix copper pool and to supply copper for cytochrome C oxidase complex assembly. May also play a role in regulation of the mitochondrial permeability transition pore (mPTP). The chain is Solute carrier family 25 member 3 from Bos taurus (Bovine).